Consider the following 313-residue polypeptide: MKHLLSIADLSKDDIIGLMDEADRFREALLGRDIKKLPTLRGRTIFTLFYENSTRTRSSFETAGKWMSADVINISAGSSSVKKGESLKDTGLTLSAIGADAIVMRHYSSGAAEQLARWVAPGGVGPSVINAGDGAHQHPTQALLDAVTIRQRLGDIDGRKVVIVGDCLHSRVVRSNVDLLTTLGAEVVLVGPPTLLPAGIDTWPVRYSYDMDAEIYDADVVMMLRVQQERMHGGFFPTHREYATLYGLSAERERKLQDHTIVMHPGPMLRGMEINFGVADAPRTAVLQQVSNGVHTRMAVLFTLIAGQDAAAF.

Arginine 55 and threonine 56 together coordinate carbamoyl phosphate. Lysine 83 contacts L-aspartate. Carbamoyl phosphate-binding residues include arginine 105, histidine 138, and glutamine 141. L-aspartate is bound by residues arginine 171 and arginine 225. Positions 266 and 267 each coordinate carbamoyl phosphate.

The protein belongs to the aspartate/ornithine carbamoyltransferase superfamily. ATCase family. As to quaternary structure, heterododecamer (2C3:3R2) of six catalytic PyrB chains organized as two trimers (C3), and six regulatory PyrI chains organized as three dimers (R2).

It carries out the reaction carbamoyl phosphate + L-aspartate = N-carbamoyl-L-aspartate + phosphate + H(+). It functions in the pathway pyrimidine metabolism; UMP biosynthesis via de novo pathway; (S)-dihydroorotate from bicarbonate: step 2/3. Catalyzes the condensation of carbamoyl phosphate and aspartate to form carbamoyl aspartate and inorganic phosphate, the committed step in the de novo pyrimidine nucleotide biosynthesis pathway. This chain is Aspartate carbamoyltransferase catalytic subunit, found in Corynebacterium diphtheriae (strain ATCC 700971 / NCTC 13129 / Biotype gravis).